The sequence spans 350 residues: Uroporphyrinogen decarboxylase (350 aa).

Residues 28 to 32 (RQAGR), D78, Y155, S210, and H325 each bind substrate.

Belongs to the uroporphyrinogen decarboxylase family. As to quaternary structure, homodimer.

It is found in the cytoplasm. It catalyses the reaction uroporphyrinogen III + 4 H(+) = coproporphyrinogen III + 4 CO2. It functions in the pathway porphyrin-containing compound metabolism; protoporphyrin-IX biosynthesis; coproporphyrinogen-III from 5-aminolevulinate: step 4/4. In terms of biological role, catalyzes the decarboxylation of four acetate groups of uroporphyrinogen-III to yield coproporphyrinogen-III. This Microcystis aeruginosa (strain NIES-843 / IAM M-2473) protein is Uroporphyrinogen decarboxylase.